We begin with the raw amino-acid sequence, 247 residues long: uncharacterized protein (247 aa).

This is an uncharacterized protein from Cryphonectria parasitica (Chestnut blight fungus).